Consider the following 90-residue polypeptide: Acylphosphatase (90 aa).

An Acylphosphatase-like domain is found at 3–89; it reads ALKIRVEGIV…EGYEDFTIKY (87 aa). Catalysis depends on residues Arg-18 and Asn-36.

This sequence belongs to the acylphosphatase family.

It carries out the reaction an acyl phosphate + H2O = a carboxylate + phosphate + H(+). This Thermotoga maritima (strain ATCC 43589 / DSM 3109 / JCM 10099 / NBRC 100826 / MSB8) protein is Acylphosphatase (acyP).